A 665-amino-acid chain; its full sequence is Phosphatidylinositol-3-phosphate phosphatase MTMR1 (665 aa).

At M1 the chain carries N-acetylmethionine. Positions 1–11 (MDRPAAAAAAG) are enriched in low complexity. Residues 1–51 (MDRPAAAAAAGCEGGGGPNPGPAGGRRPPRAAGGATAGSRQPSVETLDSPT) are disordered. The segment covering 12–24 (CEGGGGPNPGPAG) has biased composition (gly residues). Residues 39-51 (SRQPSVETLDSPT) show a composition bias toward polar residues. Phosphoserine occurs at positions 43 and 49. The region spanning 90–161 (NKLAQMEEAP…GVISRVEKIG (72 aa)) is the GRAM domain. Positions 226 to 601 (GWKVYDPVSE…SHLELWVNYY (376 aa)) constitute a Myotubularin phosphatase domain. A 1,2-diacyl-sn-glycero-3-phospho-(1D-myo-inositol-3-phosphate) contacts are provided by N351, N376, and I377. C438 functions as the Phosphocysteine intermediate in the catalytic mechanism. Residues S439, D440, G441, W442, D443, R444, and R484 each coordinate a 1,2-diacyl-sn-glycero-3-phospho-(1D-myo-inositol-3-phosphate). S439 provides a ligand contact to phosphate. Phosphate contacts are provided by G441, W442, D443, and R444. The segment at 608–665 (MRPQMPIHQNLKELLAVRAELQKRVEGLQREVATRAVSSSSERGSSPSHSATSVHTSV) is required for dimerization. Residues 642-665 (RAVSSSSERGSSPSHSATSVHTSV) are disordered. Low complexity predominate over residues 645-657 (SSSSERGSSPSHS).

The protein belongs to the protein-tyrosine phosphatase family. Non-receptor class myotubularin subfamily. As to quaternary structure, homodimer.

It localises to the cell membrane. The protein localises to the cytoplasm. The catalysed reaction is a 1,2-diacyl-sn-glycero-3-phospho-(1D-myo-inositol-3-phosphate) + H2O = a 1,2-diacyl-sn-glycero-3-phospho-(1D-myo-inositol) + phosphate. It carries out the reaction 1,2-dioctanoyl-sn-glycero-3-phospho-(1-D-myo-inositol-3-phosphate) + H2O = 1,2-dioctanoyl-sn-glycero-3-phospho-(1D-myo-inositol) + phosphate. It catalyses the reaction a 1,2-diacyl-sn-glycero-3-phospho-(1D-myo-inositol-3,5-bisphosphate) + H2O = a 1,2-diacyl-sn-glycero-3-phospho-(1D-myo-inositol-5-phosphate) + phosphate. Its function is as follows. Lipid phosphatase that specifically dephosphorylates the D-3 position of phosphatidylinositol 3-phosphate, generating phosphatidylinositol. Could also dephosphorylate phosphatidylinositol 3,5-bisphosphate to produce phosphatidylinositol 5-phosphate. In Homo sapiens (Human), this protein is Phosphatidylinositol-3-phosphate phosphatase MTMR1.